Reading from the N-terminus, the 274-residue chain is 2,3,4,5-tetrahydropyridine-2,6-dicarboxylate N-succinyltransferase (274 aa).

Residues Arg104 and Asp141 each coordinate substrate.

The protein belongs to the transferase hexapeptide repeat family. As to quaternary structure, homotrimer.

Its subcellular location is the cytoplasm. The catalysed reaction is (S)-2,3,4,5-tetrahydrodipicolinate + succinyl-CoA + H2O = (S)-2-succinylamino-6-oxoheptanedioate + CoA. It participates in amino-acid biosynthesis; L-lysine biosynthesis via DAP pathway; LL-2,6-diaminopimelate from (S)-tetrahydrodipicolinate (succinylase route): step 1/3. The sequence is that of 2,3,4,5-tetrahydropyridine-2,6-dicarboxylate N-succinyltransferase from Salmonella choleraesuis (strain SC-B67).